The chain runs to 356 residues: Probable farnesyl diphosphate synthase DDB_G0278823 (356 aa).

The isopentenyl diphosphate site is built by lysine 55, arginine 58, and glutamine 94. The Mg(2+) site is built by aspartate 101 and aspartate 105. Arginine 110 is a dimethylallyl diphosphate binding site. Arginine 111 is a binding site for isopentenyl diphosphate. 5 residues coordinate dimethylallyl diphosphate: lysine 203, threonine 204, glutamine 243, lysine 260, and lysine 269.

This sequence belongs to the FPP/GGPP synthase family. It depends on Mg(2+) as a cofactor.

The protein resides in the cytoplasm. The catalysed reaction is isopentenyl diphosphate + dimethylallyl diphosphate = (2E)-geranyl diphosphate + diphosphate. It carries out the reaction isopentenyl diphosphate + (2E)-geranyl diphosphate = (2E,6E)-farnesyl diphosphate + diphosphate. It participates in isoprenoid biosynthesis; farnesyl diphosphate biosynthesis; farnesyl diphosphate from geranyl diphosphate and isopentenyl diphosphate: step 1/1. It functions in the pathway isoprenoid biosynthesis; geranyl diphosphate biosynthesis; geranyl diphosphate from dimethylallyl diphosphate and isopentenyl diphosphate: step 1/1. Inhibited by aminobisphosphonate drugs (aBP), such as risedronate and alendronate. Its function is as follows. Key enzyme in isoprenoid biosynthesis which catalyzes the formation of farnesyl diphosphate (FPP), a sterol precursor. This Dictyostelium discoideum (Social amoeba) protein is Probable farnesyl diphosphate synthase DDB_G0278823.